A 504-amino-acid polypeptide reads, in one-letter code: Ent-kaurene oxidase-like 3 (504 aa).

A helical transmembrane segment spans residues Ser-3–Ile-23. Heme is bound at residue Cys-448.

This sequence belongs to the cytochrome P450 family. It depends on heme as a cofactor. In terms of tissue distribution, expressed in leaf blades.

The protein localises to the membrane. In terms of biological role, may hydroxylate diterpenes. This chain is Ent-kaurene oxidase-like 3, found in Oryza sativa subsp. japonica (Rice).